Here is a 233-residue protein sequence, read N- to C-terminus: MKNLLPFLTRVPIKGDFEKVREELWAFPLVALVSSALPTLVLYLKLPLSNVLAVLALYFTIGLLHLDGLADFADGVMVKGNRERKIKAMKDLNTGIAGLFAVVMVLFLQVYSLQLVPFYAIFLAELNSKLAMLLALATRKPLGQGLGAYFMERMNSGQLLGGFIFYAILLVPVVVYEQNALVSLLGLAFGGYAIKVALDNFGGINGDCIGAIAEITRAGTLLVVAFAGAYLGG.

The next 7 membrane-spanning stretches (helical) occupy residues 24–44 (LWAFPLVALVSSALPTLVLYL), 46–66 (LPLSNVLAVLALYFTIGLLHL), 96–116 (IAGLFAVVMVLFLQVYSLQLV), 117–137 (PFYAIFLAELNSKLAMLLALA), 156–176 (SGQLLGGFIFYAILLVPVVVY), 184–204 (LLGLAFGGYAIKVALDNFGGI), and 209–229 (IGAIAEITRAGTLLVVAFAGA).

The protein belongs to the CobS family. It depends on Mg(2+) as a cofactor.

It is found in the cell membrane. The catalysed reaction is alpha-ribazole + adenosylcob(III)inamide-GDP = adenosylcob(III)alamin + GMP + H(+). The enzyme catalyses alpha-ribazole 5'-phosphate + adenosylcob(III)inamide-GDP = adenosylcob(III)alamin 5'-phosphate + GMP + H(+). Its pathway is cofactor biosynthesis; adenosylcobalamin biosynthesis; adenosylcobalamin from cob(II)yrinate a,c-diamide: step 7/7. Joins adenosylcobinamide-GDP and alpha-ribazole to generate adenosylcobalamin (Ado-cobalamin). Also synthesizes adenosylcobalamin 5'-phosphate from adenosylcobinamide-GDP and alpha-ribazole 5'-phosphate. The protein is Adenosylcobinamide-GDP ribazoletransferase of Thermococcus onnurineus (strain NA1).